Here is a 166-residue protein sequence, read N- to C-terminus: Large ribosomal subunit protein uL10 (166 aa).

The protein belongs to the universal ribosomal protein uL10 family. As to quaternary structure, part of the ribosomal stalk of the 50S ribosomal subunit. The N-terminus interacts with L11 and the large rRNA to form the base of the stalk. The C-terminus forms an elongated spine to which L12 dimers bind in a sequential fashion forming a multimeric L10(L12)X complex.

Its function is as follows. Forms part of the ribosomal stalk, playing a central role in the interaction of the ribosome with GTP-bound translation factors. In Streptococcus agalactiae serotype V (strain ATCC BAA-611 / 2603 V/R), this protein is Large ribosomal subunit protein uL10.